The chain runs to 163 residues: Type II secretion system protein M (163 aa).

Residues 1-19 are Cytoplasmic-facing; sequence MMDKLQGWWRSISAREQRL. Residues 20–40 form a helical membrane-spanning segment; it reads VAVGGSCLLIGFCYWIVWQPI. The Periplasmic portion of the chain corresponds to 41–163; sequence ANRIAERERQ…VRRLQLSRPQ (123 aa).

The protein belongs to the GSP M family. Type II secretion system is composed of four main components: the outer membrane complex, the inner membrane complex, the cytoplasmic secretion ATPase and the periplasm-spanning pseudopilus. Forms homodimers. Interacts with ExeL/GspL. Interacts with ExeE/GspE and ExeF/GspF.

The protein localises to the cell inner membrane. Its function is as follows. Inner membrane component of the type II secretion system required for the energy-dependent secretion of extracellular factors such as proteases and toxins from the periplasm. Plays a role in the complex assembly and recruits ExeL resulting in a stable complex in the inner membrane. Provides thus a link between the energy-providing ExeE protein in the cytoplasm and the rest of the T2SS machinery. The protein is Type II secretion system protein M (exeM) of Aeromonas hydrophila.